A 371-amino-acid chain; its full sequence is Spermidine/putrescine import ATP-binding protein PotA (371 aa).

The ABC transporter domain occupies 10–240 (VELRNVTKSY…PKNLFVARFI (231 aa)). 42–49 (GPSGCGKT) is a binding site for ATP.

This sequence belongs to the ABC transporter superfamily. Spermidine/putrescine importer (TC 3.A.1.11.1) family. As to quaternary structure, the complex is composed of two ATP-binding proteins (PotA), two transmembrane proteins (PotB and PotC) and a solute-binding protein (PotD).

The protein resides in the cell inner membrane. It carries out the reaction ATP + H2O + polyamine-[polyamine-binding protein]Side 1 = ADP + phosphate + polyamineSide 2 + [polyamine-binding protein]Side 1.. Functionally, part of the ABC transporter complex PotABCD involved in spermidine/putrescine import. Responsible for energy coupling to the transport system. In Haemophilus ducreyi (strain 35000HP / ATCC 700724), this protein is Spermidine/putrescine import ATP-binding protein PotA.